Here is a 245-residue protein sequence, read N- to C-terminus: Dehydrogenase/reductase SDR family member 6 (245 aa).

Residues 16–18, Asp37, and Asp58 contribute to the NAD(+) site; that span reads QGI. Substrate is bound at residue Arg144. Residue Tyr147 is the Proton acceptor of the active site. Residues Lys151 and 180-184 each bind NAD(+); that span reads VDTPS. Substrate is bound by residues Arg188 and Arg205.

The protein belongs to the short-chain dehydrogenases/reductases (SDR) family. Homotetramer.

It is found in the cytoplasm. It carries out the reaction cis-4-hydroxy-L-proline + NAD(+) = 4-oxo-L-proline + NADH + H(+). The enzyme catalyses (R)-3-hydroxybutanoate + NAD(+) = acetoacetate + NADH + H(+). It participates in amino-acid metabolism. The protein operates within siderophore biosynthesis. Functionally, NAD(H)-dependent dehydrogenase/reductase with a preference for cyclic substrates. Catalyzes stereoselective conversion of 4-oxo-L-proline to cis-4-hydroxy-L-proline, likely a detoxification mechanism for ketoprolines. Mediates the formation of 2,5-dihydroxybenzoate (2,5-DHBA), a siderophore that chelates free cytoplasmic iron, thereby regulating iron transport and homeostasis while protecting cells against free radical-induced oxidative stress. The iron-siderophore complex is imported into mitochondria, providing an iron source for mitochondrial metabolic processes in particular heme synthesis. May act as a 3-hydroxybutyrate dehydrogenase. This is Dehydrogenase/reductase SDR family member 6 (bdh2) from Aquarana catesbeiana (American bullfrog).